A 147-amino-acid polypeptide reads, in one-letter code: Auxin-responsive protein SAUR41 (147 aa).

It belongs to the ARG7 family. As to expression, specifically expressed in the quiescent center and cortex or endodermis initials of root stem niches. Expressed in vascular tissues from hypocotyls, petioles and cotyledons.

Its subcellular location is the cytoplasm. Plays a role in the regulation of cell expansion, root meristem patterning and auxin transport. This Arabidopsis thaliana (Mouse-ear cress) protein is Auxin-responsive protein SAUR41.